Reading from the N-terminus, the 504-residue chain is MDKFQGYLEFDGARQQSFLYPLFFREYIYVLAYDHGLNRLNRNRYIFLENADYDKKYSSLITKRLILRMYEQNRLIIPTKDVNQNSFLGHTSLFYYQMISVLFAVIVEIPFSLRLGSSFQGKQLKKSYNLQSIHSIFPFLEDKLGHFNYVLDVLIPYPIHLEILVQTLRYRVKDASSLHFFRFCLYEYCNWKNFYIKKKSILNPRFFLFLYNSHVCEYESIFFFLRKRSSHLRSTSYEVLFERIVFYGKIHHFFKVFVNNFPAILGLLKDPFIHYVRYHGRCILATKDTPLLMNKWKYYFVNLWQCYFSVWFQSQKVNINQLSKDNLEFLGYLSSLRLNPLVVRSQMLENSFLIDNVRIKLDSKIPISSIIGSLAKDKFCNVLGHPISKATWTDSSDSDILNRFVRICRNISHYYSGSSKKKNLYRIKYILRLCCVKTLARKHKSTVRTFLKRLGSGLLEEFLTGEDQVLSLIFPRSYYASKRLYRVRIWYLDILYLNDLVNHE.

This sequence belongs to the intron maturase 2 family. MatK subfamily.

Its subcellular location is the plastid. The protein localises to the chloroplast. Its function is as follows. Usually encoded in the trnK tRNA gene intron. Probably assists in splicing its own and other chloroplast group II introns. The polypeptide is Maturase K (Arabidopsis thaliana (Mouse-ear cress)).